The following is a 562-amino-acid chain: MTRNARPNIVLLMADDLGVGDLCCYGNNSVSTPNIDRLASEGVRLTQHLAAASMCTPSRAAFLTGRYPIRSGMVSAYNLNRAFTWLGGSGGLPTNETTFAKLLQHRGYRTGLIGKWHLGLSCASRNDHCYHPLNHGFHYFYGVPFGLLSDCQASKTPELHRWLRIKLWISTVALALVPFLLLIPKFARWFSVPWKVIFVFALLAFLFFTSWYSSYGFTRRWNCILMRNHEIIQQPMKEEKVASLMLKEALAFIERYKREPFLLFFSFLHVHTPLISKKKFVGRSKYGRYGDNVEEMDWMVGKILDALDQERLANHTLVYFTSDNGGHLEPLDGAVQLGGWNGIYKGGKGMGGWEGGIRVPGIFRWPSVLEAGRVINEPTSLMDIYPTLSYIGGGILSQDRVIDGQNLMPLLEGRASHSDHEFLFHYCGVYLHTVRWHQKDCATVWKAHYVTPKFYPEGTGACYGSGICSCSGDVTYHDPPLLFDISRDPSEALPLNPDNEPLFDSVIKKMEAAIREHRRTLTPVPQQFSVFNTIWKPWLQPCCGTFPFCGCDKEDDILPMAP.

3 residues coordinate Ca(2+): Asp15, Asp16, and Cys55. Cys55 functions as the Nucleophile in the catalytic mechanism. The residue at position 55 (Cys55) is a 3-oxoalanine (Cys). Lys115 contacts substrate. His117 is a catalytic residue. A run of 2 helical transmembrane segments spans residues 167-187 and 189-209; these read LWIS…PKFA and WFSV…LFFT. His271 provides a ligand contact to substrate. Ca(2+)-binding residues include Asp323 and Asn324. Residue Lys348 participates in substrate binding.

This sequence belongs to the sulfatase family. Ca(2+) serves as cofactor. In terms of processing, the conversion to 3-oxoalanine (also known as C-formylglycine, FGly), of a serine or cysteine residue in prokaryotes and of a cysteine residue in eukaryotes, is critical for catalytic activity.

It is found in the membrane. In Homo sapiens (Human), this protein is Arylsulfatase H (ARSH).